A 62-amino-acid polypeptide reads, in one-letter code: Conotoxin Pl168 (62 aa).

An N-terminal signal peptide occupies residues 1 to 21 (MGMRMMFTVFLLVVLATTVVS). The propeptide occupies 22–40 (FTLDRASDGANAAADLVAR). Disulfide bonds link cysteine 46–cysteine 52 and cysteine 47–cysteine 61.

It belongs to the conotoxin A superfamily. Post-translationally, both Pro-53 and Pro-62 are not in cis/trans isomerization. As to expression, expressed by the venom duct.

The protein resides in the secreted. Functionally, probable neurotoxin with unknown target. Possibly targets ion channels. The sequence is that of Conotoxin Pl168 from Conus planorbis (Planorbis cone).